An 87-amino-acid polypeptide reads, in one-letter code: Spore morphogenesis and germination protein YwcE (87 aa).

3 helical membrane passes run 1-21 (MMDM…FIWL), 26-46 (VALS…FYAT), and 56-76 (LMII…FIIY).

The protein belongs to the YwcE family.

The protein localises to the cell membrane. The protein resides in the spore membrane. Its subcellular location is the spore outer membrane. Its function is as follows. Required for proper spore morphogenesis. Important for spore germination. The sequence is that of Spore morphogenesis and germination protein YwcE (ywcE) from Bacillus subtilis (strain 168).